A 424-amino-acid polypeptide reads, in one-letter code: STAM-binding protein (424 aa).

The segment at 1–127 (MSDHGDVSLP…YEQYKERKKK (127 aa)) is interaction with CHMP3. 2 positions are modified to phosphoserine: Ser-2 and Ser-48. Residues 227-231 (PAKPP) form an interaction with STAM region. Residue Ser-243 is modified to Phosphoserine. In terms of domain architecture, MPN spans 257–388 (IVVPRNLCSE…LTDYGLQEIS (132 aa)). Zn(2+) is bound by residues His-335, His-337, Asp-348, His-350, Cys-390, His-396, and His-398. A JAMM motif motif is present at residues 335 to 348 (HTHPTQTAFLSSVD).

This sequence belongs to the peptidase M67C family. Interacts with STAM. Interacts with SMAD6 and SMAD7. Interacts with CHMP3; the interaction appears to relieve the autoinhibition of CHMP3. Interacts with SMURF2 and RNF11; this interaction promotes ubiquitination. Requires Zn(2+) as cofactor. In terms of processing, phosphorylated after BMP type I receptor activation. Post-translationally, ubiquitinated by SMURF2 in the presence of RNF11. In terms of tissue distribution, expressed in brain.

Its subcellular location is the nucleus. It is found in the membrane. The protein resides in the cytoplasm. The protein localises to the early endosome. With respect to regulation, inhibited by N-ethylmaleimide. Functionally, zinc metalloprotease that specifically cleaves 'Lys-63'-linked polyubiquitin chains. Does not cleave 'Lys-48'-linked polyubiquitin chains. Plays a role in signal transduction for cell growth and MYC induction mediated by IL-2 and GM-CSF. Potentiates BMP (bone morphogenetic protein) signaling by antagonizing the inhibitory action of SMAD6 and SMAD7. Has a key role in regulation of cell surface receptor-mediated endocytosis and ubiquitin-dependent sorting of receptors to lysosomes. Endosomal localization of STAMBP is required for efficient EGFR degradation but not for its internalization. Involved in the negative regulation of PI3K-AKT-mTOR and RAS-MAP signaling pathways. This is STAM-binding protein (Stambp) from Mus musculus (Mouse).